Reading from the N-terminus, the 305-residue chain is Protoheme IX farnesyltransferase 1 (305 aa).

9 consecutive transmembrane segments (helical) span residues 30–50 (IGIV…AFQF), 59–79 (LDVI…SGAM), 108–128 (FVLT…FAAS), 129–149 (FAAG…YSMW), 154–176 (HVSN…FAAV), 180–202 (LGPG…FYAL), 232–252 (LFWI…GIGF), 253–273 (LTLA…GFTA), and 284–304 (FIYS…FAVF).

It belongs to the UbiA prenyltransferase family. Protoheme IX farnesyltransferase subfamily. As to quaternary structure, interacts with CtaA.

Its subcellular location is the cell membrane. The enzyme catalyses heme b + (2E,6E)-farnesyl diphosphate + H2O = Fe(II)-heme o + diphosphate. The protein operates within porphyrin-containing compound metabolism; heme O biosynthesis; heme O from protoheme: step 1/1. Converts heme B (protoheme IX) to heme O by substitution of the vinyl group on carbon 2 of heme B porphyrin ring with a hydroxyethyl farnesyl side group. The chain is Protoheme IX farnesyltransferase 1 from Lysinibacillus sphaericus (strain C3-41).